The primary structure comprises 271 residues: Tryptophan synthase alpha chain (271 aa).

Residues Glu-49 and Asp-60 each act as proton acceptor in the active site.

It belongs to the TrpA family. In terms of assembly, tetramer of two alpha and two beta chains.

It catalyses the reaction (1S,2R)-1-C-(indol-3-yl)glycerol 3-phosphate + L-serine = D-glyceraldehyde 3-phosphate + L-tryptophan + H2O. Its pathway is amino-acid biosynthesis; L-tryptophan biosynthesis; L-tryptophan from chorismate: step 5/5. Functionally, the alpha subunit is responsible for the aldol cleavage of indoleglycerol phosphate to indole and glyceraldehyde 3-phosphate. This is Tryptophan synthase alpha chain from Nitrosococcus oceani (strain ATCC 19707 / BCRC 17464 / JCM 30415 / NCIMB 11848 / C-107).